A 317-amino-acid chain; its full sequence is Adenine deaminase (317 aa).

Zn(2+) is bound by residues His14, His16, and His194. The Proton donor role is filled by Glu197. Asp275 is a Zn(2+) binding site. Asp276 is a binding site for substrate.

The protein belongs to the metallo-dependent hydrolases superfamily. Adenosine and AMP deaminases family. Adenine deaminase type 2 subfamily. Zn(2+) serves as cofactor.

The enzyme catalyses adenine + H2O + H(+) = hypoxanthine + NH4(+). In terms of biological role, catalyzes the hydrolytic deamination of adenine to hypoxanthine. Plays an important role in the purine salvage pathway and in nitrogen catabolism. The polypeptide is Adenine deaminase (Bordetella bronchiseptica (strain ATCC BAA-588 / NCTC 13252 / RB50) (Alcaligenes bronchisepticus)).